The sequence spans 496 residues: Cytochrome P450 71B12 (496 aa).

The chain crosses the membrane as a helical span at residues 2–22 (SLWYIIVAFVFFSSMIIVRII). C436 provides a ligand contact to heme.

This sequence belongs to the cytochrome P450 family. The cofactor is heme.

The protein localises to the membrane. This is Cytochrome P450 71B12 (CYP71B12) from Arabidopsis thaliana (Mouse-ear cress).